Consider the following 105-residue polypeptide: MAPKAFFVCLPWVLPRHALIVRQAGNPYHFLAYTNPRAPGKLQDSHCPVFFMGIIIITIITVTLAIIIINIIFLTLFDDGMCFYCSLLTFSFVSFNFDHFDHFDL.

Residues 1-48 are Extracellular-facing; that stretch reads MAPKAFFVCLPWVLPRHALIVRQAGNPYHFLAYTNPRAPGKLQDSHCP. Residues 49–69 traverse the membrane as a helical segment; the sequence is VFFMGIIIITIITVTLAIIII. Position 70 (Asn70) is a topological domain, cytoplasmic. A helical transmembrane segment spans residues 71 to 91; the sequence is IIFLTLFDDGMCFYCSLLTFS. Residues 92–105 lie on the Extracellular side of the membrane; sequence FVSFNFDHFDHFDL.

It localises to the membrane. This is an uncharacterized protein from Saccharomyces cerevisiae (strain ATCC 204508 / S288c) (Baker's yeast).